Consider the following 324-residue polypeptide: Zinc transporter ZIP1 (324 aa).

Residues M1–K30 are Extracellular-facing. A helical membrane pass occupies residues L31–V51. Over L52–A68 the chain is Cytoplasmic. A helical transmembrane segment spans residues L69–L89. Topologically, residues P90–H104 are extracellular. Residues V105 to V125 form a helical membrane-spanning segment. Residues M126–R179 are Cytoplasmic-facing. Residues A180–L200 form a helical membrane-spanning segment. At Q201–R206 the chain is on the extracellular side. Residues A207–L227 form a helical membrane-spanning segment. Over R228 to Q237 the chain is Cytoplasmic. Residues V238–A258 traverse the membrane as a helical segment. The Extracellular segment spans residues A259 to Q272. A helical transmembrane segment spans residues S273–P293. The Cytoplasmic portion of the chain corresponds to Q294 to I303. A helical transmembrane segment spans residues L304–I324.

It belongs to the ZIP transporter (TC 2.A.5) family. Ubiquitous. Expressed in most adult and fetal tissues including the epidermis.

It localises to the cell membrane. It is found in the endoplasmic reticulum membrane. The enzyme catalyses Zn(2+)(in) = Zn(2+)(out). With respect to regulation, inhibited by Ni(2+) ions. Fe(2+) ions do not inhibit zinc uptake. Transporter for the divalent cation Zn(2+). Mediates the influx of Zn(2+) into cells from extracellular space. Functions as the major importer of zinc from circulating blood plasma into prostate cells. The protein is Zinc transporter ZIP1 of Homo sapiens (Human).